The sequence spans 21 residues: Protein YliM (21 aa).

The polypeptide is Protein YliM (Escherichia coli (strain K12)).